The following is a 236-amino-acid chain: tRNA (guanine-N(7)-)-methyltransferase (236 aa).

S-adenosyl-L-methionine is bound by residues aspartate 35, glutamate 60, asparagine 87, and aspartate 113. Aspartate 113 is an active-site residue. Substrate contacts are provided by lysine 117 and aspartate 149. The interval 217 to 236 (EFEQHWQEIDNPGNAPTPDA) is disordered.

Belongs to the class I-like SAM-binding methyltransferase superfamily. TrmB family.

It carries out the reaction guanosine(46) in tRNA + S-adenosyl-L-methionine = N(7)-methylguanosine(46) in tRNA + S-adenosyl-L-homocysteine. It functions in the pathway tRNA modification; N(7)-methylguanine-tRNA biosynthesis. In terms of biological role, catalyzes the formation of N(7)-methylguanine at position 46 (m7G46) in tRNA. This Synechococcus sp. (strain CC9902) protein is tRNA (guanine-N(7)-)-methyltransferase.